A 416-amino-acid chain; its full sequence is Polyadenylation and cleavage factor homolog 1 (416 aa).

The span at 1-17 shows a compositional bias: polar residues; it reads MASNGSFSAQRNANART. A disordered region spans residues 1 to 80; sequence MASNGSFSAQ…NNNNVSRVSS (80 aa). Positions 70-80 are enriched in low complexity; sequence SNNNNVSRVSS. Positions 199–220 form a coiled coil; sequence KELTDLLSLLNNEKEKKTLEAS. Residues 254 to 276 form a C2H2-type zinc finger; it reads RQCSSCGLRFKCQEEHSKHMDWH.

In terms of assembly, forms a complex with cleavage and polyadenylation specificity factor (CPSF) subunits CLPS3, CLPS5, CPSF30, PCFS4, PCFS5, CSTF77 and FIPS3.

Its subcellular location is the nucleus. In Arabidopsis thaliana (Mouse-ear cress), this protein is Polyadenylation and cleavage factor homolog 1.